Consider the following 215-residue polypeptide: Ribonuclease HII (215 aa).

Residues 24–215 (GVVFGVDEVG…PIRQFYENVD (192 aa)) enclose the RNase H type-2 domain. Asp30, Glu31, and Asp125 together coordinate a divalent metal cation.

This sequence belongs to the RNase HII family. Mn(2+) serves as cofactor. The cofactor is Mg(2+).

The protein resides in the cytoplasm. The catalysed reaction is Endonucleolytic cleavage to 5'-phosphomonoester.. Endonuclease that specifically degrades the RNA of RNA-DNA hybrids. This Zymomonas mobilis subsp. mobilis (strain ATCC 31821 / ZM4 / CP4) protein is Ribonuclease HII.